The chain runs to 530 residues: MTPFAYKLPIRALWLGLLSLLLVGCQIDSEPKSELEKIRERGVLRVGTLNNPLSYYIGPDGPTGLDYELAREFAKELGVKLEMKPAYRLSSLFPALKNGEVDIIAAGLSQSEERLKDFRAGPAYYYVSQQVVYKKGDWRPRSFKQLVERQQTLLKDNPELAFFSVVDDSHFEHTLLAKQQKYPDFQFHVDSNSDVNDLLKKVSQGELLFTMADSVEVSLSQRIYPELAAAFELTEDQPISWFIRRSDDESLYALMIEFFGNLKQSGYLASLEEKYIGHIGAFDYVDTRAFIRALDTRLPRWTPLFQKYSAEFDWRLVAALAYQESHWNPYAKSPTGVRGLMMLTLPTARSVGVSDRLDPEQSIRGGVEYLRRMMERVPDSISEHEKIWFALASYNIGYGHMMDARRLTKSQGADPDSWADVKDRLPQLQQKKYFTQTRYGYARGDEARNYVENIRRYYQSIIGHLEQRQLATGDESIEDLTVIALDEEFFNEEANREILDEEAEALESESLENSESSAEPSAKPSTESKN.

Residues 1 to 27 (MTPFAYKLPIRALWLGLLSLLLVGCQI) form the signal peptide. The interval 28-279 (DSEPKSELEK…SLEEKYIGHI (252 aa)) is non-LT domain. The LT domain stretch occupies residues 280–530 (GAFDYVDTRA…SAKPSTESKN (251 aa)). Glu-324 is a catalytic residue. The interval 505-530 (ALESESLENSESSAEPSAKPSTESKN) is disordered. The segment covering 513 to 530 (NSESSAEPSAKPSTESKN) has biased composition (low complexity).

This sequence in the N-terminal section; belongs to the bacterial solute-binding protein 3 family. It in the C-terminal section; belongs to the transglycosylase Slt family.

It is found in the cell outer membrane. The catalysed reaction is Exolytic cleavage of the (1-&gt;4)-beta-glycosidic linkage between N-acetylmuramic acid (MurNAc) and N-acetylglucosamine (GlcNAc) residues in peptidoglycan, from either the reducing or the non-reducing ends of the peptidoglycan chains, with concomitant formation of a 1,6-anhydrobond in the MurNAc residue.. Its function is as follows. Murein-degrading enzyme that degrades murein glycan strands and insoluble, high-molecular weight murein sacculi, with the concomitant formation of a 1,6-anhydromuramoyl product. Lytic transglycosylases (LTs) play an integral role in the metabolism of the peptidoglycan (PG) sacculus. Their lytic action creates space within the PG sacculus to allow for its expansion as well as for the insertion of various structures such as secretion systems and flagella. This Vibrio cholerae serotype O1 (strain ATCC 39541 / Classical Ogawa 395 / O395) protein is Membrane-bound lytic murein transglycosylase F.